A 469-amino-acid polypeptide reads, in one-letter code: UDP-N-acetylmuramoylalanine--D-glutamate ligase (469 aa).

Residue 110 to 116 (GTNGKST) coordinates ATP.

The protein belongs to the MurCDEF family.

Its subcellular location is the cytoplasm. The catalysed reaction is UDP-N-acetyl-alpha-D-muramoyl-L-alanine + D-glutamate + ATP = UDP-N-acetyl-alpha-D-muramoyl-L-alanyl-D-glutamate + ADP + phosphate + H(+). Its pathway is cell wall biogenesis; peptidoglycan biosynthesis. Its function is as follows. Cell wall formation. Catalyzes the addition of glutamate to the nucleotide precursor UDP-N-acetylmuramoyl-L-alanine (UMA). In Synechococcus sp. (strain JA-3-3Ab) (Cyanobacteria bacterium Yellowstone A-Prime), this protein is UDP-N-acetylmuramoylalanine--D-glutamate ligase.